A 313-amino-acid polypeptide reads, in one-letter code: Methionyl-tRNA formyltransferase (313 aa).

109–112 lines the (6S)-5,6,7,8-tetrahydrofolate pocket; sequence SLLP.

It belongs to the Fmt family.

The enzyme catalyses L-methionyl-tRNA(fMet) + (6R)-10-formyltetrahydrofolate = N-formyl-L-methionyl-tRNA(fMet) + (6S)-5,6,7,8-tetrahydrofolate + H(+). Its function is as follows. Attaches a formyl group to the free amino group of methionyl-tRNA(fMet). The formyl group appears to play a dual role in the initiator identity of N-formylmethionyl-tRNA by promoting its recognition by IF2 and preventing the misappropriation of this tRNA by the elongation apparatus. The sequence is that of Methionyl-tRNA formyltransferase from Thermotoga neapolitana (strain ATCC 49049 / DSM 4359 / NBRC 107923 / NS-E).